Consider the following 368-residue polypeptide: Methionine import ATP-binding protein MetN (368 aa).

Residues 1–14 are compositionally biased toward polar residues; that stretch reads MASDAQPSVDQPSA. The tract at residues 1-27 is disordered; that stretch reads MASDAQPSVDQPSAGTPGATGNSTGTT. Over residues 15–27 the composition is skewed to low complexity; sequence GTPGATGNSTGTT. The ABC transporter domain occupies 31–270; it reads IVFRDVTKIF…PQTKTAANFV (240 aa). ATP is bound at residue 67–74; that stretch reads GYSGAGKS.

This sequence belongs to the ABC transporter superfamily. Methionine importer (TC 3.A.1.24) family. In terms of assembly, the complex is composed of two ATP-binding proteins (MetN), two transmembrane proteins (MetI) and a solute-binding protein (MetQ).

The protein localises to the cell membrane. The catalysed reaction is L-methionine(out) + ATP + H2O = L-methionine(in) + ADP + phosphate + H(+). It catalyses the reaction D-methionine(out) + ATP + H2O = D-methionine(in) + ADP + phosphate + H(+). Part of the ABC transporter complex MetNIQ involved in methionine import. Responsible for energy coupling to the transport system. The chain is Methionine import ATP-binding protein MetN from Corynebacterium jeikeium (strain K411).